Consider the following 462-residue polypeptide: Argininosuccinate lyase (462 aa).

Belongs to the lyase 1 family. Argininosuccinate lyase subfamily.

It localises to the cytoplasm. The catalysed reaction is 2-(N(omega)-L-arginino)succinate = fumarate + L-arginine. The protein operates within amino-acid biosynthesis; L-arginine biosynthesis; L-arginine from L-ornithine and carbamoyl phosphate: step 3/3. The chain is Argininosuccinate lyase from Bacillus cereus (strain ATCC 14579 / DSM 31 / CCUG 7414 / JCM 2152 / NBRC 15305 / NCIMB 9373 / NCTC 2599 / NRRL B-3711).